Consider the following 258-residue polypeptide: Development-specific 25 kDa protein (258 aa).

10–34 (VYVGGFSGFGYQVCQMMMKKPMKHL) serves as a coordination point for NAD(+). Ser-138 lines the substrate pocket. Tyr-151 (proton acceptor) is an active-site residue.

Belongs to the short-chain dehydrogenases/reductases (SDR) family.

The chain is Development-specific 25 kDa protein from Sarcophaga peregrina (Flesh fly).